The chain runs to 311 residues: HPr kinase/phosphorylase (311 aa).

Residues H138 and K159 contribute to the active site. Position 153–160 (153–160 (GKSGVGKS)) interacts with ATP. A Mg(2+)-binding site is contributed by S160. D177 functions as the Proton acceptor; for phosphorylation activity. Proton donor; for dephosphorylation activity in the catalytic mechanism. Residues 201-210 (LEIRGLGIIN) are important for the catalytic mechanism of both phosphorylation and dephosphorylation. E202 provides a ligand contact to Mg(2+). The active site involves R243. The tract at residues 264 to 269 (PVRPGR) is important for the catalytic mechanism of dephosphorylation.

It belongs to the HPrK/P family. As to quaternary structure, homohexamer. The cofactor is Mg(2+).

The catalysed reaction is [HPr protein]-L-serine + ATP = [HPr protein]-O-phospho-L-serine + ADP + H(+). It carries out the reaction [HPr protein]-O-phospho-L-serine + phosphate + H(+) = [HPr protein]-L-serine + diphosphate. Functionally, catalyzes the ATP- as well as the pyrophosphate-dependent phosphorylation of a specific serine residue in HPr, a phosphocarrier protein of the phosphoenolpyruvate-dependent sugar phosphotransferase system (PTS). HprK/P also catalyzes the pyrophosphate-producing, inorganic phosphate-dependent dephosphorylation (phosphorolysis) of seryl-phosphorylated HPr (P-Ser-HPr). The two antagonistic activities of HprK/P are regulated by several intracellular metabolites, which change their concentration in response to the absence or presence of rapidly metabolisable carbon sources (glucose, fructose, etc.) in the growth medium. Also phosphorylates/dephosphorylates the HPr-like catabolite repression protein crh on a specific serine residue. Therefore, by controlling the phosphorylation state of HPr and crh, HPrK/P is a sensor enzyme that plays a major role in the regulation of carbon metabolism and sugar transport: it mediates carbon catabolite repression (CCR), and regulates PTS-catalyzed carbohydrate uptake and inducer exclusion. The chain is HPr kinase/phosphorylase from Geobacillus kaustophilus (strain HTA426).